We begin with the raw amino-acid sequence, 32 residues long: Calcitonin (32 aa).

Cys-1 and Cys-7 are disulfide-bonded. Pro-32 bears the Proline amide mark.

It belongs to the calcitonin family.

It is found in the secreted. Functionally, causes a rapid but short-lived drop in the level of calcium and phosphate in blood by promoting the incorporation of those ions in the bones. The chain is Calcitonin from Anguilla japonica (Japanese eel).